The chain runs to 213 residues: Large ribosomal subunit protein uL3 (213 aa).

The segment at 131–155 (GRASHGNSVSHRAHGSTGNNQDPGR) is disordered. Positions 135-152 (HGNSVSHRAHGSTGNNQD) are enriched in polar residues. Glutamine 151 bears the N5-methylglutamine mark.

It belongs to the universal ribosomal protein uL3 family. Part of the 50S ribosomal subunit. Forms a cluster with proteins L14 and L19. Post-translationally, methylated by PrmB.

Functionally, one of the primary rRNA binding proteins, it binds directly near the 3'-end of the 23S rRNA, where it nucleates assembly of the 50S subunit. The chain is Large ribosomal subunit protein uL3 from Agrobacterium fabrum (strain C58 / ATCC 33970) (Agrobacterium tumefaciens (strain C58)).